The sequence spans 162 residues: Phosphopantetheine adenylyltransferase (162 aa).

Serine 9 is a substrate binding site. ATP is bound by residues 9–10 and histidine 17; that span reads SF. Residues lysine 41, leucine 77, and lysine 91 each coordinate substrate. ATP-binding positions include 92-94, glutamate 102, and 126-132; these read GLR and YAFLSSS.

The protein belongs to the bacterial CoaD family. In terms of assembly, homohexamer. The cofactor is Mg(2+).

The protein localises to the cytoplasm. It catalyses the reaction (R)-4'-phosphopantetheine + ATP + H(+) = 3'-dephospho-CoA + diphosphate. The protein operates within cofactor biosynthesis; coenzyme A biosynthesis; CoA from (R)-pantothenate: step 4/5. In terms of biological role, reversibly transfers an adenylyl group from ATP to 4'-phosphopantetheine, yielding dephospho-CoA (dPCoA) and pyrophosphate. The chain is Phosphopantetheine adenylyltransferase from Parafrankia sp. (strain EAN1pec).